Reading from the N-terminus, the 405-residue chain is Eukaryotic translation initiation factor 5 (405 aa).

27–34 (GRGNGIKT) is a GTP binding site. The interval 143-202 (NPPDSVSGSKKKKKAATASANVRGGGLSISDIAQGKSQNAPSDGTGSSTPQHHDEDEDEL) is disordered. Phosphoserine occurs at positions 170 and 172. The span at 177 to 192 (GKSQNAPSDGTGSSTP) shows a compositional bias: polar residues. A Phosphothreonine modification is found at Thr191. Ser228 carries the phosphoserine modification. The W2 domain maps to 241–402 (VNSELTQLDE…ETAESDDDEE (162 aa)). The residue at position 317 (Thr317) is a Phosphothreonine. Ser397 carries the post-translational modification Phosphoserine.

This sequence belongs to the eIF-2-beta/eIF-5 family. Monomer. The factors eIF-1, eIF-2, eIF-3, TIF5/eIF-5 and methionyl-tRNAi form a multifactor complex (MFC) that may bind to the 40S ribosome. TIF32, NIP1 and TIF5/eIF-5 comprise a minimal 40S-ribosome-binding unit. Interacts with NIP1. Interacts with SUI3.

In terms of biological role, catalyzes the hydrolysis of GTP bound to the 40S ribosomal initiation complex (40S.mRNA.Met-tRNA[F].eIF-2.GTP) with the subsequent joining of a 60S ribosomal subunit resulting in the release of eIF-2 and the guanine nucleotide. The subsequent joining of a 60S ribosomal subunit results in the formation of a functional 80S initiation complex (80S.mRNA.Met-tRNA[F]). eIF-5 is essential for cell viability. The chain is Eukaryotic translation initiation factor 5 (TIF5) from Saccharomyces cerevisiae (strain ATCC 204508 / S288c) (Baker's yeast).